Here is a 633-residue protein sequence, read N- to C-terminus: Copine-7 (633 aa).

C2 domains follow at residues 2–133 and 212–339; these read SAGS…MRVS and NAGK…AQWD. Ca(2+) is bound by residues aspartate 245, aspartate 251, aspartate 307, aspartate 309, and aspartate 315. A VWFA domain is found at 382 to 581; it reads HFTVAIDFTA…PALRDIVQFV (200 aa).

It belongs to the copine family. Ca(2+) is required as a cofactor. As to expression, expressed in the brain, testis, thymus and small intestine.

Its subcellular location is the cytoplasm. The protein localises to the nucleus. The protein resides in the cell membrane. In terms of biological role, calcium-dependent phospholipid-binding protein that may play a role in calcium-mediated intracellular processes. This is Copine-7 from Homo sapiens (Human).